We begin with the raw amino-acid sequence, 270 residues long: Formamidopyrimidine-DNA glycosylase (270 aa).

Residue Pro2 is the Schiff-base intermediate with DNA of the active site. The Proton donor role is filled by Glu3. Lys58 acts as the Proton donor; for beta-elimination activity in catalysis. Residues His91, Arg110, and Arg151 each coordinate DNA. The FPG-type zinc-finger motif lies at 236–270 (FVYGRGGQPCKVCGTELREVKLGQRASVYCPRCQR). The active-site Proton donor; for delta-elimination activity is Arg260.

It belongs to the FPG family. As to quaternary structure, monomer. Requires Zn(2+) as cofactor.

The catalysed reaction is Hydrolysis of DNA containing ring-opened 7-methylguanine residues, releasing 2,6-diamino-4-hydroxy-5-(N-methyl)formamidopyrimidine.. The enzyme catalyses 2'-deoxyribonucleotide-(2'-deoxyribose 5'-phosphate)-2'-deoxyribonucleotide-DNA = a 3'-end 2'-deoxyribonucleotide-(2,3-dehydro-2,3-deoxyribose 5'-phosphate)-DNA + a 5'-end 5'-phospho-2'-deoxyribonucleoside-DNA + H(+). Its function is as follows. Involved in base excision repair of DNA damaged by oxidation or by mutagenic agents. Acts as a DNA glycosylase that recognizes and removes damaged bases. Has a preference for oxidized purines, such as 7,8-dihydro-8-oxoguanine (8-oxoG). Has AP (apurinic/apyrimidinic) lyase activity and introduces nicks in the DNA strand. Cleaves the DNA backbone by beta-delta elimination to generate a single-strand break at the site of the removed base with both 3'- and 5'-phosphates. The polypeptide is Formamidopyrimidine-DNA glycosylase (Pseudomonas putida (strain ATCC 700007 / DSM 6899 / JCM 31910 / BCRC 17059 / LMG 24140 / F1)).